The following is a 102-amino-acid chain: MTPLQQLAATIEARKGADPASSWTAKLLSKGPEKCAEKFGEEAVEAIIEAVKGDRDALTSEAADALYHLLVMCAARDVSLSDIEAELESRHGTSGLTEKANR.

It belongs to the PRA-PH family.

Its subcellular location is the cytoplasm. The catalysed reaction is 1-(5-phospho-beta-D-ribosyl)-ATP + H2O = 1-(5-phospho-beta-D-ribosyl)-5'-AMP + diphosphate + H(+). It participates in amino-acid biosynthesis; L-histidine biosynthesis; L-histidine from 5-phospho-alpha-D-ribose 1-diphosphate: step 2/9. The sequence is that of Phosphoribosyl-ATP pyrophosphatase from Jannaschia sp. (strain CCS1).